A 248-amino-acid chain; its full sequence is Tyrosine recombinase XerD-like (248 aa).

In terms of domain architecture, Core-binding (CB) spans 1–72 (MKSYIEPFIA…TANQFLYYLY (72 aa)). Residues 85–248 (DTMKVMRTEK…PVTLEKYYKS (164 aa)) form the Tyr recombinase domain. Residues lysine 149 and arginine 213 contribute to the active site. Tyrosine 245 serves as the catalytic O-(3'-phospho-DNA)-tyrosine intermediate.

The protein belongs to the 'phage' integrase family. XerD-like subfamily.

It is found in the cytoplasm. Functionally, putative tyrosine recombinase. Not involved in the cutting and rejoining of the recombining DNA molecules on dif(SL) site. In Streptococcus pyogenes serotype M28 (strain MGAS6180), this protein is Tyrosine recombinase XerD-like.